A 642-amino-acid polypeptide reads, in one-letter code: Myrosinase-binding protein 2 (642 aa).

Jacalin-type lectin domains are found at residues 2-151 (SEKV…HFFA), 156-291 (LKHF…HFAP), 334-477 (PNKV…YFAP), and 490-633 (SKKL…HAVP). Pro residues predominate over residues 296–334 (TPAPAPAPAPAPAPAPSPAPASAPVPAPAPTPAPAPAPP). Disordered regions lie at residues 296 to 338 (TPAP…NKVE) and 479 to 499 (TNST…RGGN). Low complexity predominate over residues 479 to 490 (TNSTTPSTPSTS).

Belongs to the jacalin lectin family. As to expression, expressed in flowers. Detected mainly in ovules and styles of immature flowers, but also in pistils, styles, stamens, petals and embryos. Not detected in leaves.

This Arabidopsis thaliana (Mouse-ear cress) protein is Myrosinase-binding protein 2 (F-ATMBP).